The following is a 157-amino-acid chain: UPF0587 protein C2D10.03c (157 aa).

Zn(2+) contacts are provided by cysteine 34, cysteine 37, cysteine 68, and cysteine 71.

This sequence belongs to the UPF0587 family.

The polypeptide is UPF0587 protein C2D10.03c (Schizosaccharomyces pombe (strain 972 / ATCC 24843) (Fission yeast)).